We begin with the raw amino-acid sequence, 2517 residues long: Protein capicua homolog (2517 aa).

Disordered stretches follow at residues 1-197, 300-325, 342-483, 531-579, 608-640, and 658-767; these read MKPM…SGSY, LSPG…HREP, PWEP…KYKK, EMEG…RGDS, SSRS…FGFR, and VRSR…FRAV. Over residues 57-67 the composition is skewed to acidic residues; the sequence is EEAEEGEEEEA. Residues 91 to 101 are compositionally biased toward basic and acidic residues; it reads EDPKGDGEAGR. 2 stretches are compositionally biased toward low complexity: residues 158 to 167 and 300 to 313; these read TSTRSSSTDT and LSPG…LPGS. Positions 396-405 are enriched in basic and acidic residues; the sequence is HCEEGEEKHP. Residues 414-428 are compositionally biased toward pro residues; sequence LPLPPPQLLSPPPKS. A compositionally biased stretch (low complexity) spans 451-477; it reads GSRSSSVASLEKGTAPAARARTPLTAA. The segment covering 608–619 has biased composition (polar residues); the sequence is SSRSGTPSFSPV. A compositionally biased stretch (pro residues) spans 677-686; sequence DLGPHPPPPA. Over residues 698 to 707 the composition is skewed to polar residues; it reads TFQTNLTFTV. A compositionally biased stretch (gly residues) spans 726 to 735; that stretch reads GAPGAGGGGA. Phosphoserine is present on residues Ser-776 and Ser-780. Disordered stretches follow at residues 812 to 842, 955 to 1110, 1179 to 1220, 1235 to 1274, 1290 to 1347, 1379 to 1539, and 1595 to 1628; these read IVRN…PGRG, PSQP…DHIR, CNKD…APGV, SDTK…SLDG, SGPA…TSDE, RVTD…ILQT, and IASK…RVPG. The tract at residues 937–955 is interaction with ATXN1; sequence EPRSVAVFPWHSLVPFLAP. Residues 959-981 are compositionally biased toward polar residues; the sequence is DPSVQPSEAQQPASHPVASNQSK. Residues Ser-1055 and Ser-1082 each carry the phosphoserine modification. Composition is skewed to basic and acidic residues over residues 1087–1110, 1179–1188, and 1200–1209; these read PKER…DHIR, CNKDRKKSSS, and GHKETRERSM. Arg-1099 carries the post-translational modification Omega-N-methylarginine. The HMG box DNA-binding region spans 1109-1177; the sequence is IRRPMNAFMI…AHFKAHPDWK (69 aa). Ser-1186 is modified (phosphoserine). The span at 1235 to 1245 shows a compositional bias: polar residues; sequence SDTKAPGSSSC. Position 1271 is a phosphoserine (Ser-1271). Residues 1305 to 1323 show a composition bias toward low complexity; that stretch reads GAPGPFAAPGEGGALAATG. 3 positions are modified to phosphoserine: Ser-1340, Ser-1345, and Ser-1405. The segment covering 1418-1430 has biased composition (pro residues); the sequence is PLDPEPPGPPDPP. Low complexity predominate over residues 1439–1456; that stretch reads SAPSSSASSPASSSASAA. Positions 1457 to 1474 are enriched in polar residues; the sequence is TSFSLGSGTFKAQESGQG. Residues Ser-1609, Ser-1630, and Ser-1648 each carry the phosphoserine modification. Arg-1772 is subject to Asymmetric dimethylarginine. Residues 1799-1818 form a disordered region; it reads QSVPSAPPPKAQSVSPVQAP. Omega-N-methylarginine is present on Arg-1843. Disordered regions lie at residues 2039–2064, 2100–2342, and 2430–2517; these read AATI…FPSA, SFEA…AKCE, and AATP…ATGR. Residues 2051 to 2064 are compositionally biased toward low complexity; it reads ATATPAPTSPFPSA. 2 stretches are compositionally biased toward pro residues: residues 2110-2119 and 2136-2145; these read GPAPRQPLEP and PTPPAPPPLP. Positions 2146–2155 are enriched in low complexity; it reads ETWTPTARSS. Residue Lys-2177 is modified to N6-acetyllysine. Positions 2198–2209 are enriched in pro residues; it reads PPTPPSPAPAPA. Residue Thr-2200 is modified to Phosphothreonine. A Phosphoserine modification is found at Ser-2203. A compositionally biased stretch (low complexity) spans 2210 to 2225; the sequence is VAPGGSSESSSGRAAG. Residues 2249 to 2278 show a composition bias toward basic and acidic residues; the sequence is KTFDSVDNRVLSEVDFEERFAELPEFRPEE. A phosphoserine mark is found at Ser-2260, Ser-2282, Ser-2287, Ser-2291, Ser-2298, and Ser-2306. Position 2307 is a phosphothreonine (Thr-2307). Ser-2311 and Ser-2318 each carry phosphoserine. The span at 2457-2469 shows a compositional bias: pro residues; that stretch reads APTPSPAGGPDPT. Position 2504 is a phosphoserine (Ser-2504).

Found in a complex with ATXN1 and ATXN1L. As to quaternary structure, interacts with ATXN1. In terms of tissue distribution, expressed in fetal brain.

It is found in the nucleus. In terms of biological role, transcriptional repressor which plays a role in development of the central nervous system (CNS). In concert with ATXN1 and ATXN1L, involved in brain development. The chain is Protein capicua homolog (CIC) from Homo sapiens (Human).